Here is a 398-residue protein sequence, read N- to C-terminus: Probable aminomethyltransferase (398 aa).

Belongs to the GcvT family. The glycine cleavage system is composed of four proteins: P, T, L and H.

The enzyme catalyses N(6)-[(R)-S(8)-aminomethyldihydrolipoyl]-L-lysyl-[protein] + (6S)-5,6,7,8-tetrahydrofolate = N(6)-[(R)-dihydrolipoyl]-L-lysyl-[protein] + (6R)-5,10-methylene-5,6,7,8-tetrahydrofolate + NH4(+). In terms of biological role, the glycine cleavage system catalyzes the degradation of glycine. The chain is Probable aminomethyltransferase from Pyrococcus furiosus (strain ATCC 43587 / DSM 3638 / JCM 8422 / Vc1).